Reading from the N-terminus, the 273-residue chain is Large ribosomal subunit protein uL2 (273 aa).

The segment at 221–263 (RGTAMNPVDHPHGGGEGRNFGKHPVSPWGLQTKGKKTRKNKRT) is disordered. Positions 253–263 (KGKKTRKNKRT) are enriched in basic residues.

The protein belongs to the universal ribosomal protein uL2 family. As to quaternary structure, part of the 50S ribosomal subunit. Forms a bridge to the 30S subunit in the 70S ribosome.

Its function is as follows. One of the primary rRNA binding proteins. Required for association of the 30S and 50S subunits to form the 70S ribosome, for tRNA binding and peptide bond formation. It has been suggested to have peptidyltransferase activity; this is somewhat controversial. Makes several contacts with the 16S rRNA in the 70S ribosome. The protein is Large ribosomal subunit protein uL2 of Buchnera aphidicola subsp. Baizongia pistaciae (strain Bp).